Reading from the N-terminus, the 60-residue chain is Large ribosomal subunit protein uL30 (60 aa).

It belongs to the universal ribosomal protein uL30 family. In terms of assembly, part of the 50S ribosomal subunit.

The chain is Large ribosomal subunit protein uL30 from Shewanella sp. (strain ANA-3).